The sequence spans 445 residues: POU domain, class 3, transcription factor 2 (445 aa).

Disordered stretches follow at residues 63 to 173 (TALS…WRSA), 203 to 269 (LGAG…TPTS), 336 to 361 (EADSSSGSPTSIDKIASQGRKRKKRT), and 411 to 445 (EKRMTPPGGTLPGAEDVYGGSRDTPPHHGVQTPVQ). Over residues 68–90 (GGSGGGGGGGGGGGGGGGGGGDG) the composition is skewed to gly residues. Positions 125-151 (QQQHQQQQQQQQQQQQQQQQQQQQQQQ) are enriched in low complexity. Residues 217–226 (LRDAHDEPHH) show a composition bias toward basic and acidic residues. The segment covering 227–237 (ADHHPHPHSHP) has biased composition (basic residues). Positions 239-253 (QQPPPPPPPQGPPGH) are enriched in pro residues. Residues 264 to 338 (EDTPTSDDLE…LLNKWLEEAD (75 aa)) enclose the POU-specific domain. Serine 343 is subject to Phosphoserine. The segment at residues 356–415 (KRKKRTSIEVSVKGALESHFLKCPKPSAQEITSLADSLQLEKEVVRVWFCNRRQKEKRMT) is a DNA-binding region (homeobox).

This sequence belongs to the POU transcription factor family. Class-3 subfamily. Interacts with PQBP1. Interaction with ISL1. Expressed specifically at high levels in the brain.

It is found in the nucleus. Transcription factor that plays a key role in neuronal differentiation. Binds preferentially to the recognition sequence which consists of two distinct half-sites, ('GCAT') and ('TAAT'), separated by a non-conserved spacer region of 0, 2, or 3 nucleotides. Acts as a transcriptional activator when binding cooperatively with SOX4, SOX11, or SOX12 to gene promoters. The combination of three transcription factors, ASCL1, POU3F2/BRN2 and MYT1L, is sufficient to reprogram fibroblasts and other somatic cells into induced neuronal (iN) cells in vitro. Acts downstream of ASCL1, accessing chromatin that has been opened by ASCL1, and promotes transcription of neuronal genes. The polypeptide is POU domain, class 3, transcription factor 2 (Pou3f2) (Rattus norvegicus (Rat)).